The primary structure comprises 664 residues: Transketolase 1 (664 aa).

Residue His26 coordinates substrate. Thiamine diphosphate contacts are provided by residues His66 and 114 to 116 (GPL). Asp155 is a Mg(2+) binding site. Residues Gly156 and Asn185 each coordinate thiamine diphosphate. Residues Asn185 and Ile187 each coordinate Mg(2+). The substrate site is built by His260, Arg357, and Ser384. Residue His260 participates in thiamine diphosphate binding. Glu411 acts as the Proton donor in catalysis. Thiamine diphosphate is bound at residue Phe437. Substrate contacts are provided by His461, Asp469, and Arg520.

Belongs to the transketolase family. In terms of assembly, homodimer. Mg(2+) serves as cofactor. Requires Ca(2+) as cofactor. It depends on Mn(2+) as a cofactor. Co(2+) is required as a cofactor. The cofactor is thiamine diphosphate.

The catalysed reaction is D-sedoheptulose 7-phosphate + D-glyceraldehyde 3-phosphate = aldehydo-D-ribose 5-phosphate + D-xylulose 5-phosphate. Functionally, catalyzes the transfer of a two-carbon ketol group from a ketose donor to an aldose acceptor, via a covalent intermediate with the cofactor thiamine pyrophosphate. In Aliivibrio fischeri (strain ATCC 700601 / ES114) (Vibrio fischeri), this protein is Transketolase 1 (tkt1).